We begin with the raw amino-acid sequence, 527 residues long: Catalase (527 aa).

The segment covering 1–22 (MADSRDPASDQMKHWKEERAAQ) has biased composition (basic and acidic residues). The tract at residues 1–32 (MADSRDPASDQMKHWKEERAAQKPDVLTTAGG) is disordered. Position 2 is an N-acetylalanine (alanine 2). Phosphoserine is present on serine 9. An N6-succinyllysine modification is found at lysine 13. Residues histidine 75 and asparagine 148 contribute to the active site. The NADP(+) site is built by histidine 194, serine 201, arginine 203, and asparagine 213. Lysine 221 is subject to N6-succinyllysine. Residue lysine 233 is modified to N6-acetyllysine. NADP(+) is bound by residues lysine 237, tryptophan 303, histidine 305, and lysine 306. Residue lysine 306 is modified to N6-acetyllysine; alternate. Lysine 306 bears the N6-succinyllysine; alternate mark. Tyrosine 358 is a binding site for heme. Phosphoserine is present on serine 434. Residue lysine 480 is modified to N6-acetyllysine; alternate. Lysine 480 carries the N6-succinyllysine; alternate modification. Lysine 499 is modified (N6-acetyllysine). At threonine 511 the chain carries Phosphothreonine. The residue at position 517 (serine 517) is a Phosphoserine. N6-succinyllysine is present on lysine 522. Residues 524–527 (KANL) carry the Microbody targeting signal; atypical motif.

The protein belongs to the catalase family. As to quaternary structure, homotetramer. Interacts (via microbody targeting signal) with PEX5, monomeric form interacts with PEX5, leading to its translocation into peroxisomes. Heme is required as a cofactor. The cofactor is NADP(+).

The protein localises to the peroxisome matrix. The enzyme catalyses 2 H2O2 = O2 + 2 H2O. Its function is as follows. Catalyzes the degradation of hydrogen peroxide (H(2)O(2)) generated by peroxisomal oxidases to water and oxygen, thereby protecting cells from the toxic effects of hydrogen peroxide. Promotes growth of cells including T-cells, B-cells, myeloid leukemia cells, melanoma cells, mastocytoma cells and normal and transformed fibroblast cells. This Cavia porcellus (Guinea pig) protein is Catalase (CAT).